We begin with the raw amino-acid sequence, 576 residues long: Proline--tRNA ligase (576 aa).

The protein belongs to the class-II aminoacyl-tRNA synthetase family. ProS type 1 subfamily. As to quaternary structure, homodimer.

Its subcellular location is the cytoplasm. It carries out the reaction tRNA(Pro) + L-proline + ATP = L-prolyl-tRNA(Pro) + AMP + diphosphate. Functionally, catalyzes the attachment of proline to tRNA(Pro) in a two-step reaction: proline is first activated by ATP to form Pro-AMP and then transferred to the acceptor end of tRNA(Pro). As ProRS can inadvertently accommodate and process non-cognate amino acids such as alanine and cysteine, to avoid such errors it has two additional distinct editing activities against alanine. One activity is designated as 'pretransfer' editing and involves the tRNA(Pro)-independent hydrolysis of activated Ala-AMP. The other activity is designated 'posttransfer' editing and involves deacylation of mischarged Ala-tRNA(Pro). The misacylated Cys-tRNA(Pro) is not edited by ProRS. This is Proline--tRNA ligase from Thiobacillus denitrificans (strain ATCC 25259 / T1).